Consider the following 318-residue polypeptide: Nisin-resistance protein (318 aa).

A helical membrane pass occupies residues 7–28; sequence ILLGLVAVCALFLGIIYLWGYK.

The protein resides in the cell membrane. In Lactococcus lactis subsp. lactis (Streptococcus lactis), this protein is Nisin-resistance protein (nsr).